The following is a 361-amino-acid chain: Protein-glutamate methylesterase/protein-glutamine glutaminase 1 (361 aa).

One can recognise a Response regulatory domain in the interval 10–127 (KVLVVDDSAL…REGIEEKAQE (118 aa)). A 4-aspartylphosphate modification is found at aspartate 61. One can recognise a CheB-type methylesterase domain in the interval 167 to 359 (FATTDKLIAV…ASVKRWYAEN (193 aa)). Catalysis depends on residues serine 179, histidine 205, and aspartate 301.

Belongs to the CheB family. Phosphorylated by CheA. Phosphorylation of the N-terminal regulatory domain activates the methylesterase activity.

The protein localises to the cytoplasm. The catalysed reaction is [protein]-L-glutamate 5-O-methyl ester + H2O = L-glutamyl-[protein] + methanol + H(+). The enzyme catalyses L-glutaminyl-[protein] + H2O = L-glutamyl-[protein] + NH4(+). Involved in chemotaxis. Part of a chemotaxis signal transduction system that modulates chemotaxis in response to various stimuli. Catalyzes the demethylation of specific methylglutamate residues introduced into the chemoreceptors (methyl-accepting chemotaxis proteins or MCP) by CheR. Also mediates the irreversible deamidation of specific glutamine residues to glutamic acid. This is Protein-glutamate methylesterase/protein-glutamine glutaminase 1 from Hahella chejuensis (strain KCTC 2396).